The following is a 296-amino-acid chain: Bifunctional protein FolD (296 aa).

NADP(+)-binding positions include 166-168 (GRS), Ser-191, and Ile-232.

It belongs to the tetrahydrofolate dehydrogenase/cyclohydrolase family. In terms of assembly, homodimer.

It catalyses the reaction (6R)-5,10-methylene-5,6,7,8-tetrahydrofolate + NADP(+) = (6R)-5,10-methenyltetrahydrofolate + NADPH. The catalysed reaction is (6R)-5,10-methenyltetrahydrofolate + H2O = (6R)-10-formyltetrahydrofolate + H(+). It participates in one-carbon metabolism; tetrahydrofolate interconversion. In terms of biological role, catalyzes the oxidation of 5,10-methylenetetrahydrofolate to 5,10-methenyltetrahydrofolate and then the hydrolysis of 5,10-methenyltetrahydrofolate to 10-formyltetrahydrofolate. The chain is Bifunctional protein FolD from Cereibacter sphaeroides (strain ATCC 17029 / ATH 2.4.9) (Rhodobacter sphaeroides).